Here is a 366-residue protein sequence, read N- to C-terminus: GTP cyclohydrolase 1 type 2 homolog (366 aa).

The Zn(2+) site is built by His-64, His-65, Asp-102, His-326, and Glu-329.

It belongs to the GTP cyclohydrolase I type 2/NIF3 family. Homohexamer.

The polypeptide is GTP cyclohydrolase 1 type 2 homolog (Staphylococcus aureus (strain MSSA476)).